Reading from the N-terminus, the 203-residue chain is Large ribosomal subunit protein bL25 (203 aa).

It belongs to the bacterial ribosomal protein bL25 family. CTC subfamily. As to quaternary structure, part of the 50S ribosomal subunit; part of the 5S rRNA/L5/L18/L25 subcomplex. Contacts the 5S rRNA. Binds to the 5S rRNA independently of L5 and L18.

In terms of biological role, this is one of the proteins that binds to the 5S RNA in the ribosome where it forms part of the central protuberance. This chain is Large ribosomal subunit protein bL25, found in Rickettsia conorii (strain ATCC VR-613 / Malish 7).